Here is a 503-residue protein sequence, read N- to C-terminus: MKPAIALEGISKSFPGVRALSDVSLALYPGSVTALVGENGAGKSTLVKILTGIYQPDAGTIRLGDTETTFPTALAASRAGVTAIHQETVLFDELSVAENIFLGHAPRNRFGLIDWKQLNADAQALLGRAGADFDPTIRLRDLGIAKKHLVAIARALSVDARVVIMDEPTAALSHKEIHELYDLIERLKADGKAVLFISHKFDEIFRIADRYTVFRDGAMIGEGLIADVSQDDLVRMMVGRAVGSVYPKKEVTIGQPVLTVSGYRHPTEFEDINFELRRGEILGFYGLVGAGRSEFMQSLIGITRPSAGAVKLDGEVLVIRSPAEAIRAGIVYVPEERGRQGAIIGMPIFQNVTLPSLSHTSRSGFLRLAEEFALAREYTSRLDLRAAALDQDVGTLSGGNQQKVVIAKWLATRPKVIILDEPTKGIDIGSKAAVHAFMSELAAQGLSVIMVSSEIPEIMGMSDRVIVMREGRVAGRYERSELTAEKLVRAAAGIETQADGRAA.

ABC transporter domains follow at residues 5-241 (IALE…VGRA) and 253-495 (IGQP…AGIE). Position 37–44 (37–44 (GENGAGKS)) interacts with ATP.

It belongs to the ABC transporter superfamily. Ribose importer (TC 3.A.1.2.1) family. In terms of assembly, the complex is composed of an ATP-binding protein (RbsA), two transmembrane proteins (RbsC) and a solute-binding protein (RbsB).

Its subcellular location is the cell inner membrane. The catalysed reaction is D-ribose(out) + ATP + H2O = D-ribose(in) + ADP + phosphate + H(+). Part of the ABC transporter complex RbsABC involved in ribose import. Responsible for energy coupling to the transport system. This Rhizobium meliloti (strain 1021) (Ensifer meliloti) protein is Ribose import ATP-binding protein RbsA 1.